The following is a 287-amino-acid chain: Probable aquaporin PIP1-5 (287 aa).

Met-1 bears the N-acetylmethionine mark. The tract at residues 1 to 34 is disordered; sequence MEGKEEDVNVGANKFPERQPIGTAAQTESKDYKE. Topologically, residues 1 to 55 are cytoplasmic; sequence MEGKEEDVNVGANKFPERQPIGTAAQTESKDYKEPPPAPFFEPGELKSWSFYRAG. The helical transmembrane segment at 56–76 threads the bilayer; the sequence is IAEFIATFLFLYVTVLTVMGV. Over 77–92 the chain is Extracellular; it reads KRAPNMCASVGIQGIA. A helical transmembrane segment spans residues 93–113; it reads WAFGGMIFALVYCTAGISGGH. At 114-133 the chain is on the cytoplasmic side; that stretch reads INPAVTFGLFLARKLSLTRA. The NPA 1 signature appears at 115-117; that stretch reads NPA. Residues 134 to 154 traverse the membrane as a helical segment; the sequence is LFYIVMQCLGAICGAGVVKGF. Residues 155–175 are Extracellular-facing; that stretch reads QPGLYQTNGGGANVVAHGYTK. A helical transmembrane segment spans residues 176–196; that stretch reads GSGLGAEIVGTFVLVYTVFSA. The Cytoplasmic segment spans residues 197–209; sequence TDAKRSARDSHVP. The chain crosses the membrane as a helical span at residues 210–230; sequence ILAPLPIGFAVFLVHLATIPI. The Extracellular segment spans residues 231–257; it reads TGTGINPARSLGAAIIYNKDHAWDDHW. The NPA 2 signature appears at 236 to 238; that stretch reads NPA. Residues 258 to 278 traverse the membrane as a helical segment; it reads IFWVGPFIGAALAALYHQIVI. The Cytoplasmic segment spans residues 279-287; sequence RAIPFKSKT. Phosphoserine is present on Ser-285.

Belongs to the MIP/aquaporin (TC 1.A.8) family. PIP (TC 1.A.8.11) subfamily. In terms of tissue distribution, predominantly expressed in green siliques. Also expressed above ground, in roots and flower buds.

The protein resides in the cell membrane. In terms of biological role, aquaporins facilitate the transport of water and small neutral solutes across cell membranes. This Arabidopsis thaliana (Mouse-ear cress) protein is Probable aquaporin PIP1-5 (PIP1-5).